Reading from the N-terminus, the 310-residue chain is 5-oxoprolinase subunit C (310 aa).

The protein belongs to the PxpC family. As to quaternary structure, forms a complex composed of PxpA, PxpB and PxpC.

The catalysed reaction is 5-oxo-L-proline + ATP + 2 H2O = L-glutamate + ADP + phosphate + H(+). Catalyzes the cleavage of 5-oxoproline to form L-glutamate coupled to the hydrolysis of ATP to ADP and inorganic phosphate. This Escherichia coli (strain K12) protein is 5-oxoprolinase subunit C.